The primary structure comprises 266 residues: Undecaprenyl-diphosphatase (266 aa).

7 helical membrane-spanning segments follow: residues 41–61 (NLAFTIVVHVATVFSTLVVLW), 80–100 (TKYVINILISMIPIGIVGVFF), 107–127 (IFGSGLLVVGCMLLLTAALLA), 140–160 (ISMKDAFIIGLAQACAVMPGL), 180–200 (LAQFSFLMVIPPILGEALLDV), 213–233 (IPALSLAVGFMAAFVSGCVAC), and 245–265 (LIYFAIYCAIAGLVTIACTLL).

The protein belongs to the UppP family.

Its subcellular location is the cell inner membrane. The enzyme catalyses di-trans,octa-cis-undecaprenyl diphosphate + H2O = di-trans,octa-cis-undecaprenyl phosphate + phosphate + H(+). Catalyzes the dephosphorylation of undecaprenyl diphosphate (UPP). Confers resistance to bacitracin. The polypeptide is Undecaprenyl-diphosphatase (Parabacteroides distasonis (strain ATCC 8503 / DSM 20701 / CIP 104284 / JCM 5825 / NCTC 11152)).